Consider the following 129-residue polypeptide: uncharacterized protein (129 aa).

The segment covering 86-96 (NDGFSSDDEPE) has biased composition (acidic residues). Residues 86–116 (NDGFSSDDEPEEHVILTEDNQGEPSETPQAT) form a disordered region. Residues 103 to 116 (EDNQGEPSETPQAT) are compositionally biased toward polar residues.

This sequence belongs to the asfivirus D129L family.

This is an uncharacterized protein from African swine fever virus (strain Badajoz 1971 Vero-adapted) (Ba71V).